Reading from the N-terminus, the 370-residue chain is MYLAYIFFLFATVSAIPTGRVEIVFPSVETSRSGMKTVKFRALGEDVELKLEPAGDILAQDFALYNGNQEKQQSVNVESLRRRLYRDSANGAALLIDDDEQPPSIEGIVFSKLRISPHEWKEVTEEGKRAHQVEELTSDRDSYLSDDILIPDFQREMVSFTRIDRNDKCIVIEVLLVTDRKFTERCETNEALTEYVTLLSSVTEALFRQLDSGWQLRLLGIMTFTNETEPPLFEESKHPNGAYKPVFVNKINDYFRENPTSLSKNADIIGILLTRSMRDRMDDWYSFEGLAFGNSVCSGNKACAINAYEKAEQAAYNLAHEMAHSLGIFHDGEFYRCVPEEVSEVISCPNSNYIMGYNSGDNYGKIFRMF.

A signal peptide spans 1-15 (MYLAYIFFLFATVSA). The Peptidase M12B domain occupies 170-370 (IVIEVLLVTD…DNYGKIFRMF (201 aa)). A glycan (N-linked (GalNAc...) asparagine) is linked at Asn226. His320 contacts Zn(2+). Glu321 is an active-site residue. Zn(2+) is bound by residues His324 and His330.

The protein belongs to the venom metalloproteinase (M12B) family. As to expression, expressed by the venom gland.

It is found in the secreted. Metalloprotease that may disrupt the cell matrix and the process of clotting blood or hemolymph. In Tityus obscurus (Amazonian scorpion), this protein is Metalloproteinase.